Consider the following 239-residue polypeptide: mRNA turnover protein 4 homolog (239 aa).

The disordered stretch occupies residues 216–239 (QQMGDDLPESAPESEGESEEEDDS). Acidic residues predominate over residues 221 to 239 (DLPESAPESEGESEEEDDS). Phosphoserine is present on residues S225, S229, and S233.

The protein belongs to the universal ribosomal protein uL10 family. In terms of assembly, associates with the pre-60S ribosomal particle. Interacts with MINAS-60 (product of an alternative open reading frame of RBM10).

The protein localises to the nucleus. The protein resides in the nucleolus. Its subcellular location is the cytoplasm. Functionally, component of the ribosome assembly machinery. Nuclear paralog of the ribosomal protein P0, it binds pre-60S subunits at an early stage of assembly in the nucleolus, and is replaced by P0 in cytoplasmic pre-60S subunits and mature 80S ribosomes. In Bos taurus (Bovine), this protein is mRNA turnover protein 4 homolog (MRTO4).